Reading from the N-terminus, the 2771-residue chain is Teneurin-4 (2771 aa).

A compositionally biased stretch (basic and acidic residues) spans 1-22 (MDVKERKPYRSLTRRRDAERRY). Residues 1–45 (MDVKERKPYRSLTRRRDAERRYTSSSADSEEGKGPQKSYSSSETL) form a disordered region. The Teneurin N-terminal domain occupies 1–341 (MDVKERKPYR…KPSKYCNWKC (341 aa)). Over 1–345 (MDVKERKPYR…YCNWKCAALS (345 aa)) the chain is Cytoplasmic. Residue S124 is modified to Phosphoserine. The tract at residues 132-233 (WGRSTRSGRS…PPAGSAQEPT (102 aa)) is disordered. Low complexity predominate over residues 134–155 (RSTRSGRSSCLSSRANSNLTLT). Residues 156-166 (DTEHENTETDH) show a composition bias toward basic and acidic residues. T178 is subject to Phosphothreonine. A compositionally biased stretch (polar residues) spans 191 to 211 (QHHAASINSLNRGNFTPRSNP). A helical membrane pass occupies residues 346-366 (AILISATLVILLAYFVAMHLF). Over 367–2771 (GLNWHLQPME…FMRQSEMGRR (2405 aa)) the chain is Extracellular. Residues 403-428 (SGGTGLETPDRKGKGAAEGKPSSLFP) are disordered. Basic and acidic residues predominate over residues 410-419 (TPDRKGKGAA). Residue N469 is glycosylated (N-linked (GlcNAc...) asparagine). Positions 509 to 528 (ARSLEGPQRQSRGPVPPSSH) are disordered. EGF-like domains lie at 564–595 (SVDN…PDCG), 596–626 (RASC…AECD), 628–660 (PTNQ…ESCE), 661–692 (EVDC…TNCE), 694–727 (PRAT…HDCS), 728–759 (IEIC…ACDQ), 760–789 (RACH…EHCT), and 790–833 (IAHY…TGCD). Cystine bridges form between C568–C578, C572–C583, C585–C594, C603–C614, C616–C625, C632–C643, C637–C648, C650–C659, C664–C675, C669–C680, C682–C691, C702–C715, C717–C726, C731–C741, C735–C746, C748–C757, C762–C772, C766–C777, C779–C788, C802–C812, C806–C821, and C823–C832. 2 N-linked (GlcNAc...) asparagine glycosylation sites follow: N942 and N1261. 5 NHL repeats span residues 1218–1261 (SCPS…PSGN), 1266–1310 (LEMR…VKST), 1336–1380 (TRCG…NGII), 1395–1446 (LSCD…VAGR), and 1525–1568 (CFSG…IRKN). One copy of the YD 1 repeat lies at 1578-1597 (YELSSPIDQELYLFDTSGKH). N-linked (GlcNAc...) asparagine glycosylation occurs at N1611. YD repeat units follow at residues 1614-1634 (YTGD…VNVR), 1677-1696 (YHGN…WTTF), and 1697-1719 (YEYD…SSFR). N-linked (GlcNAc...) asparagine glycans are attached at residues N1707, N1743, N1801, and N1886. 18 YD repeats span residues 1889–1908 (YSPG…ERME), 1930–1948 (YLEK…YIFE), 1949–1969 (FDKN…QTLE), 1976–1993 (YYRN…VIQD), 1994–2015 (FTED…VIYK), 2016–2033 (YGKL…TKVS), 2036–2056 (YDET…FTCT), 2059–2079 (YRQI…EGMV), 2087–2106 (YDNS…TPLP), 2112–2129 (YDDV…GVIY), 2130–2156 (YDIN…MKEV), 2158–2171 (YEIF…MTVQ), 2172–2195 (YDNM…TRYS), 2198–2218 (YDAD…WRYS), 2219–2239 (YDLN…LTPL), 2241–2261 (YDLR…DEDG), 2273–2293 (YNSA…SVRY), and 2295–2315 (YDGL…LQFF). Residue N1987 is glycosylated (N-linked (GlcNAc...) asparagine). N-linked (GlcNAc...) asparagine glycosylation is present at N2190. A glycan (N-linked (GlcNAc...) asparagine) is linked at N2330. The stretch at 2341–2382 (YDLQGHLFAMELSSGDEFYIACDNIGTPLAVFSGTGLMIKQI) is one YD 23 repeat. N2648 is a glycosylation site (N-linked (GlcNAc...) asparagine).

The protein belongs to the tenascin family. Teneurin subfamily. Homodimer; disulfide-linked. May also form heterodimer with either TENM1 or TENM2 or TENM3. Expressed in brain and spinal cord (at protein level). Expressed in neurons and oligodendrocytes of the spinal cord. Expressed weakly in kidney, lung and spleen. Expressed in the cortex, CA1, CA2 and CA3 of the hippocampus. Expressed in the white matter, Purkinje cells and molecular layer of the cerebellum.

Its subcellular location is the cell membrane. It is found in the cell projection. The protein localises to the nucleus. It localises to the cytoplasm. Functionally, involved in neural development, regulating the establishment of proper connectivity within the nervous system. Plays a role in the establishment of the anterior-posterior axis during gastrulation. Regulates the differentiation and cellular process formation of oligodendrocytes and myelination of small-diameter axons in the central nervous system (CNS). Promotes activation of focal adhesion kinase. May function as a cellular signal transducer. The chain is Teneurin-4 (Tenm4) from Mus musculus (Mouse).